Reading from the N-terminus, the 182-residue chain is Large ribosomal subunit protein uL5 (182 aa).

The protein belongs to the universal ribosomal protein uL5 family. In terms of assembly, part of the 50S ribosomal subunit; part of the 5S rRNA/L5/L18/L25 subcomplex. Contacts the 5S rRNA and the P site tRNA. Forms a bridge to the 30S subunit in the 70S ribosome.

Its function is as follows. This is one of the proteins that bind and probably mediate the attachment of the 5S RNA into the large ribosomal subunit, where it forms part of the central protuberance. In the 70S ribosome it contacts protein S13 of the 30S subunit (bridge B1b), connecting the 2 subunits; this bridge is implicated in subunit movement. Contacts the P site tRNA; the 5S rRNA and some of its associated proteins might help stabilize positioning of ribosome-bound tRNAs. The chain is Large ribosomal subunit protein uL5 from Nostoc sp. (strain PCC 7120 / SAG 25.82 / UTEX 2576).